The primary structure comprises 30 residues: Non-toxic phospholipase A2 (30 aa).

Ca(2+) contacts are provided by Tyr-26, Gly-28, and Gly-30.

Belongs to the phospholipase A2 family. Group I subfamily. Homodimer. The cofactor is Ca(2+). In terms of processing, glycosylated. Expressed by the venom gland.

It is found in the secreted. The enzyme catalyses a 1,2-diacyl-sn-glycero-3-phosphocholine + H2O = a 1-acyl-sn-glycero-3-phosphocholine + a fatty acid + H(+). Its activity is regulated as follows. Enzymatic activity is diminished by Cd(2+) and Hg(2+). In terms of biological role, relatively highly potent phospholipase A2 that displays potent antimicrobial and hemolytic activities. It does not show cytotoxic effects on the three human cell lines tested. PLA2 catalyzes the calcium-dependent hydrolysis of the 2-acyl groups in 3-sn-phosphoglycerides. It shows similar potencies on both Gram-negative and Gram-positive bacteria: B.cereus (MIC&gt;9 ug/ml), B.subtilis (MIC&gt;12 ug/ml), E.faecalis (MIC&gt;7 ug/ml), S.epidermidis (MIC&gt;12 ug/ml), S.aureux (MIC&gt;5 ug/ml), E.coli (MIC&gt;7 ug/ml), K.pneumonia (MIC&gt;8 ug/ml), P.aeruginosa (MIC&gt;10 ug/ml), and S.enteric (MIC&gt;9 ug/ml). It also shows antifungal activities: A.niger (MIC&gt;15 ug/ml), B.cinerea (MIC&gt;12 ug/ml), F.solani (MIC&gt;15 ug/ml), and P.digitatum (MIC&gt;10 ug/ml). This chain is Non-toxic phospholipase A2, found in Walterinnesia aegyptia (Desert black snake).